We begin with the raw amino-acid sequence, 460 residues long: GTPase Der (460 aa).

2 EngA-type G domains span residues lysine 2–isoleucine 164 and isoleucine 199–threonine 370. GTP-binding positions include glycine 8 to serine 15, aspartate 55 to leucine 59, asparagine 116 to aspartate 119, glycine 205 to serine 212, aspartate 252 to isoleucine 256, and asparagine 316 to aspartate 319. Positions glutamine 371 to glycine 454 constitute a KH-like domain.

It belongs to the TRAFAC class TrmE-Era-EngA-EngB-Septin-like GTPase superfamily. EngA (Der) GTPase family. As to quaternary structure, associates with the 50S ribosomal subunit.

In terms of biological role, GTPase that plays an essential role in the late steps of ribosome biogenesis. This chain is GTPase Der, found in Campylobacter hominis (strain ATCC BAA-381 / DSM 21671 / CCUG 45161 / LMG 19568 / NCTC 13146 / CH001A).